The primary structure comprises 542 residues: MARYVFITGGVVSSLGKGIAAAALGALLQSRGYRVRLRKLDPYLNVDPGTMSPTQHGEVFVTDDGAETDLDLGHYERFTGRSATKTDNITTGRIYKNIIDKERRGDYLGATVQVIPHVTNEIKDFVTEGNDDYDFVICEIGGTVGDIEAMPFMEAIRQLGNDLPRGTAIYVHLTLMPYIPAAGELKTKPTQHSVKELQALGIHPDILLVRADREIPEAERRKLSLFCNVRPSAVIQALDVANIYDVPIAYHNEGLDSEVLAAFGIEPAPKPRLEQWEEVCNRIRTPEGEVTIAIVGKYTGLKDAYKSLIEALHHGGFANRVKVKLEWIESEVFEKEDPTPYLEKVNGILVPGGFGERGSEGKIMAAQFARERNVPYFGICFGMQMAVVEAARHLAGIENASSTEFGPTAEPVVGLMTEWVKGNELEKRSTKGDLGGTMRLGAYKAALKKDTKIAEIYGTTDISERHRHRYEVNVDYKDRLEECGLVFSGMSPDGVLPETVEYPDHPWFIGVQYHPELKSRPLDPHPLFASFVEAAVEQSRLV.

Residues 1 to 265 (MARYVFITGG…DSEVLAAFGI (265 aa)) are amidoligase domain. CTP is bound at residue Ser-13. Ser-13 provides a ligand contact to UTP. ATP is bound by residues 14 to 19 (SLGKGI) and Asp-71. Mg(2+) is bound by residues Asp-71 and Glu-139. Residues 146–148 (DIE), 186–191 (KTKPTQ), and Lys-222 each bind CTP. UTP-binding positions include 186-191 (KTKPTQ) and Lys-222. A Glutamine amidotransferase type-1 domain is found at 291–541 (TIAIVGKYTG…VEAAVEQSRL (251 aa)). Gly-353 is a binding site for L-glutamine. The Nucleophile; for glutamine hydrolysis role is filled by Cys-380. Residues 381 to 384 (FGMQ), Glu-404, and Arg-469 each bind L-glutamine. Residues His-514 and Glu-516 contribute to the active site.

The protein belongs to the CTP synthase family. In terms of assembly, homotetramer.

It catalyses the reaction UTP + L-glutamine + ATP + H2O = CTP + L-glutamate + ADP + phosphate + 2 H(+). The enzyme catalyses L-glutamine + H2O = L-glutamate + NH4(+). It carries out the reaction UTP + NH4(+) + ATP = CTP + ADP + phosphate + 2 H(+). The protein operates within pyrimidine metabolism; CTP biosynthesis via de novo pathway; CTP from UDP: step 2/2. Allosterically activated by GTP, when glutamine is the substrate; GTP has no effect on the reaction when ammonia is the substrate. The allosteric effector GTP functions by stabilizing the protein conformation that binds the tetrahedral intermediate(s) formed during glutamine hydrolysis. Inhibited by the product CTP, via allosteric rather than competitive inhibition. Its function is as follows. Catalyzes the ATP-dependent amination of UTP to CTP with either L-glutamine or ammonia as the source of nitrogen. Regulates intracellular CTP levels through interactions with the four ribonucleotide triphosphates. The protein is CTP synthase of Agrobacterium fabrum (strain C58 / ATCC 33970) (Agrobacterium tumefaciens (strain C58)).